An 808-amino-acid chain; its full sequence is DNA replication licensing factor MCM3 (808 aa).

Position 2 is an N-acetylalanine (alanine 2). Phosphoserine is present on residues serine 160 and serine 275. Lysine 293 carries the post-translational modification N6-acetyllysine. Positions 295 to 502 (IFDQLARSLA…QDREISDHVL (208 aa)) constitute an MCM domain. Positions 353, 393, 394, 395, and 397 each coordinate ADP. The Arginine finger signature appears at 477–480 (SRFD). Position 523 (alanine 523) interacts with ATP. Serine 535 is modified (phosphoserine; by ATM). An N6-acetyllysine modification is found at lysine 547. Residue serine 611 is modified to Phosphoserine. The segment at 662–739 (KKRKKRSEDE…ETKESQKVEL (78 aa)) is disordered. ATP is bound at residue arginine 664. Serine 668, serine 672, and serine 681 each carry phosphoserine. The span at 679-688 (EKSQEDQEQK) shows a compositional bias: basic and acidic residues. Tyrosine 708 carries the phosphotyrosine modification. A phosphothreonine mark is found at threonine 713 and threonine 722. Residues 727–739 (DSQETKESQKVEL) are compositionally biased toward basic and acidic residues. Residues serine 728 and serine 734 each carry the phosphoserine modification.

It belongs to the MCM family. Component of the MCM2-7 complex. The complex forms a toroidal hexameric ring with the proposed subunit order MCM2-MCM6-MCM4-MCM7-MCM3-MCM5. Component of the CMG helicase complex, a hexameric ring of related MCM2-7 subunits stabilized by CDC45 and the tetrameric GINS complex. Associated with the replication-specific DNA polymerase alpha. Interacts with MCMBP. Interacts with ANKRD17. Interacts with MCM3AP isoform MCM3AP; this interaction leads to MCM3 acetylation. Post-translationally, acetylated by MCM3AP. In terms of processing, O-glycosylated (O-GlcNAcylated), in a cell cycle-dependent manner.

Its subcellular location is the nucleus. It localises to the chromosome. It catalyses the reaction ATP + H2O = ADP + phosphate + H(+). In terms of biological role, acts as a component of the MCM2-7 complex (MCM complex) which is the replicative helicase essential for 'once per cell cycle' DNA replication initiation and elongation in eukaryotic cells. Core component of CDC45-MCM-GINS (CMG) helicase, the molecular machine that unwinds template DNA during replication, and around which the replisome is built. The active ATPase sites in the MCM2-7 ring are formed through the interaction surfaces of two neighboring subunits such that a critical structure of a conserved arginine finger motif is provided in trans relative to the ATP-binding site of the Walker A box of the adjacent subunit. The six ATPase active sites, however, are likely to contribute differentially to the complex helicase activity. Required for the entry in S phase and for cell division. The sequence is that of DNA replication licensing factor MCM3 (MCM3) from Bos taurus (Bovine).